The sequence spans 1101 residues: Lysylphosphatidylglycerol biosynthesis bifunctional protein LysX (1101 aa).

The phosphatidylglycerol lysyltransferase stretch occupies residues 1-601 (MTATRLVRAH…RLHSDGTAPD (601 aa)). The next 7 membrane-spanning stretches (helical) occupy residues 18-38 (VPAA…LASV), 60-80 (FPDT…ALAA), 84-104 (IAWW…VTGL), 113-133 (DVGE…LLLA), 151-171 (VTLV…LELF), 183-200 (YALN…GAFS), and 207-227 (VNAL…VVLF). Residues 602–1101 (RIGPVGDGAD…TLPFPLAKPR (500 aa)) form a lysine--tRNA ligase region. The OB DNA-binding region spans 662 to 740 (VTVSGRVLRA…SVLVTRWRLI (79 aa)). Mg(2+) contacts are provided by D1013 and E1020.

It in the N-terminal section; belongs to the LPG synthetase family. This sequence in the C-terminal section; belongs to the class-II aminoacyl-tRNA synthetase family. Mg(2+) is required as a cofactor.

It is found in the cell membrane. The catalysed reaction is tRNA(Lys) + L-lysine + ATP = L-lysyl-tRNA(Lys) + AMP + diphosphate. It catalyses the reaction L-lysyl-tRNA(Lys) + a 1,2-diacyl-sn-glycero-3-phospho-(1'-sn-glycerol) = a 1,2-diacyl-sn-glycero-3-phospho-1'-(3'-O-L-lysyl)-sn-glycerol + tRNA(Lys). In terms of biological role, catalyzes the production of L-lysyl-tRNA(Lys)transfer and the transfer of a lysyl group from L-lysyl-tRNA(Lys) to membrane-bound phosphatidylglycerol (PG), which produces lysylphosphatidylglycerol (LPG), one of the components of the bacterial membrane with a positive net charge. LPG synthesis contributes to the resistance to cationic antimicrobial peptides (CAMPs) and likely protects M.tuberculosis against the CAMPs produced by competiting microorganisms (bacteriocins). In fact, the modification of anionic phosphatidylglycerol with positively charged L-lysine results in repulsion of the peptides. In Mycolicibacterium gilvum (strain PYR-GCK) (Mycobacterium gilvum (strain PYR-GCK)), this protein is Lysylphosphatidylglycerol biosynthesis bifunctional protein LysX (lysX).